Reading from the N-terminus, the 412-residue chain is MSYIEKTDPELFEAIKKEAERQEYKLNLIASENYASKAVMEAQGSILTNKYAEGYSGKRYYGGCDFVDIAEDLAIARAKKIFNAGYVNVQPHSGSGANMAVYFSVLKPGDTIMSMDLSHGGHLSHGSPVSFSGKLFNIVPYGVSKKTEMLDYSELMKKAKENKPQMIVCGASAYPREIDFKQFREIADEVGAYLLADIAHIAGLVVAGVHPSPVPYADFVTSTTHKTLRGPRGGIIISKTEELATRINKAVFPGLQGGPLMHIIAGKAVAFKEAMSEKFKQDQVQTVKNAKTLCKCLKEKGFDMVSGDTDNHLMLVNLNNMNITGKDAEAALSKAGIIANKNTVPFETRSPFITSGVRLGTPACTTRGMKETEMELIADYIETAITNSENDKILSETSDKVRELCSRFPVYC.

(6S)-5,6,7,8-tetrahydrofolate is bound by residues L117 and 121-123 (GHL). K226 is modified (N6-(pyridoxal phosphate)lysine). Residues E242 and 350–352 (SPF) contribute to the (6S)-5,6,7,8-tetrahydrofolate site.

The protein belongs to the SHMT family. In terms of assembly, homodimer. Pyridoxal 5'-phosphate serves as cofactor.

It is found in the cytoplasm. The catalysed reaction is (6R)-5,10-methylene-5,6,7,8-tetrahydrofolate + glycine + H2O = (6S)-5,6,7,8-tetrahydrofolate + L-serine. Its pathway is one-carbon metabolism; tetrahydrofolate interconversion. It functions in the pathway amino-acid biosynthesis; glycine biosynthesis; glycine from L-serine: step 1/1. Functionally, catalyzes the reversible interconversion of serine and glycine with tetrahydrofolate (THF) serving as the one-carbon carrier. Appears to be specific for THF as the pteridine substrate, since the use of tetrahydromethanopterin (H4MPT) is much less efficient. Also exhibits THF-independent aldolase activity toward beta-hydroxyamino acids, producing glycine and aldehydes, via a retro-aldol mechanism. Thus, is able to catalyze the cleavage of L-allo-threonine and L-threo-beta-phenylserine. The chain is Serine hydroxymethyltransferase from Methanosarcina barkeri (strain Fusaro / DSM 804).